A 228-amino-acid chain; its full sequence is Urease accessory protein UreF (228 aa).

Belongs to the UreF family. In terms of assembly, ureD, UreF and UreG form a complex that acts as a GTP-hydrolysis-dependent molecular chaperone, activating the urease apoprotein by helping to assemble the nickel containing metallocenter of UreC. The UreE protein probably delivers the nickel.

Its subcellular location is the cytoplasm. Required for maturation of urease via the functional incorporation of the urease nickel metallocenter. The chain is Urease accessory protein UreF from Photorhabdus laumondii subsp. laumondii (strain DSM 15139 / CIP 105565 / TT01) (Photorhabdus luminescens subsp. laumondii).